An 83-amino-acid chain; its full sequence is RNA-binding protein Hfq (83 aa).

Positions 9 to 69 constitute a Sm domain; that stretch reads DQLLNTARKE…ISTIIPAKPI (61 aa).

Belongs to the Hfq family. Homohexamer.

Its function is as follows. RNA chaperone that binds small regulatory RNA (sRNAs) and mRNAs to facilitate mRNA translational regulation in response to envelope stress, environmental stress and changes in metabolite concentrations. Also binds with high specificity to tRNAs. The chain is RNA-binding protein Hfq from Leptospira biflexa serovar Patoc (strain Patoc 1 / Ames).